Consider the following 366-residue polypeptide: Beta sliding clamp (366 aa).

This sequence belongs to the beta sliding clamp family. In terms of assembly, forms a ring-shaped head-to-tail homodimer around DNA which binds and tethers DNA polymerases and other proteins to the DNA. The DNA replisome complex has a single clamp-loading complex (3 tau and 1 each of delta, delta', psi and chi subunits) which binds 3 Pol III cores (1 core on the leading strand and 2 on the lagging strand) each with a beta sliding clamp dimer. Additional proteins in the replisome are other copies of gamma, psi and chi, Ssb, DNA helicase and RNA primase.

It localises to the cytoplasm. In terms of biological role, confers DNA tethering and processivity to DNA polymerases and other proteins. Acts as a clamp, forming a ring around DNA (a reaction catalyzed by the clamp-loading complex) which diffuses in an ATP-independent manner freely and bidirectionally along dsDNA. Initially characterized for its ability to contact the catalytic subunit of DNA polymerase III (Pol III), a complex, multichain enzyme responsible for most of the replicative synthesis in bacteria; Pol III exhibits 3'-5' exonuclease proofreading activity. The beta chain is required for initiation of replication as well as for processivity of DNA replication. In Vibrio cholerae serotype O1 (strain ATCC 39315 / El Tor Inaba N16961), this protein is Beta sliding clamp (dnaN).